An 860-amino-acid chain; its full sequence is DNA mismatch repair protein MutS (860 aa).

Gly-607 to Ser-614 contributes to the ATP binding site.

This sequence belongs to the DNA mismatch repair MutS family.

Its function is as follows. This protein is involved in the repair of mismatches in DNA. It is possible that it carries out the mismatch recognition step. This protein has a weak ATPase activity. The protein is DNA mismatch repair protein MutS of Listeria welshimeri serovar 6b (strain ATCC 35897 / DSM 20650 / CCUG 15529 / CIP 8149 / NCTC 11857 / SLCC 5334 / V8).